We begin with the raw amino-acid sequence, 450 residues long: ADP-specific phosphofructokinase (450 aa).

The 449-residue stretch at 1–449 (MIPEHLSIYT…FLTYLEFLKR (449 aa)) folds into the ADPK domain. Mg(2+) contacts are provided by E260, E290, and D433. Residue D433 is the Proton acceptor of the active site.

It belongs to the carbohydrate kinase PfkC family. Requires Mg(2+) as cofactor.

The protein resides in the cytoplasm. It catalyses the reaction beta-D-fructose 6-phosphate + ADP = beta-D-fructose 1,6-bisphosphate + AMP + H(+). It functions in the pathway carbohydrate degradation; glycolysis. Its function is as follows. Catalyzes the phosphorylation of fructose 6-phosphate to fructose 1,6-bisphosphate using ADP as the phosphate donor. The polypeptide is ADP-specific phosphofructokinase (Pyrococcus horikoshii (strain ATCC 700860 / DSM 12428 / JCM 9974 / NBRC 100139 / OT-3)).